Consider the following 531-residue polypeptide: MSLPSGHTTGHTDQVVQRRARCWDIYQRRFSSRSEPVNPGMHSSSHQQQDGDAAMHGAHMDSPVRYTPYTISPYNRKGSFRKQDQTHVNMEREQKPPERRMEGNMPDGTLGSWFKITVPFGIKYNEKWLLNLIQNECSVPFVPVEFHYENMHASFFVENASIAYALKNVSGKIWDEDNEKISIFVNPAGIPHFVHRELKSEKVEQIKLAMNQQCDVSQEALDIQRLPFYPDMVNRDTKMASNPRKCMAASLDVHEENIPTVMSAGEMDKWKGIEPGEKCADRSPVCTTFSDTSSNINSILELFPKLLCLDGQQSPRATLCGTEAHKRLPTCKGSFFGSEMLKNLVLQFLQQYYLIYDSGDRQGLLSAYHDEACFSLSIPFNPEDSAPSSFCKFFKDSRNIKILKDPYLRGELLKHTKLDIVDSLSALPKTQHDLSSFLVDMWYQTEWMLCFSVNGVFKEVEGQSQGSVLAFTRTFIATPGSSSSLCIVNDKLFVRDTSHQGTQSALFTLVPTAFSSSVPAFSQEQQKMLPS.

Disordered regions lie at residues 33-59 (RSEPVNPGMHSSSHQQQDGDAAMHGAH) and 83-106 (QDQTHVNMEREQKPPERRMEGNMP). The segment covering 41–50 (MHSSSHQQQD) has biased composition (polar residues). The span at 83-102 (QDQTHVNMEREQKPPERRME) shows a compositional bias: basic and acidic residues. In terms of domain architecture, RRM spans 113 to 192 (WFKITVPFGI…IFVNPAGIPH (80 aa)). Residues 344–494 (LVLQFLQQYY…LCIVNDKLFV (151 aa)) form the NTF2 domain.

The protein belongs to the NXF family. In terms of assembly, interacts with NXT1, NXT2, E1B-AP5 and CRM1 nuclear export factor. In terms of tissue distribution, expressed at high level in testis and at low level in a small number of tissues.

The protein resides in the nucleus. It localises to the cytoplasm. Functionally, may function as a tissue-specific nuclear mRNA export factor. This is Nuclear RNA export factor 3 (NXF3) from Homo sapiens (Human).